The primary structure comprises 146 residues: D-aminoacyl-tRNA deacylase (146 aa).

A Gly-cisPro motif, important for rejection of L-amino acids motif is present at residues 137–138 (GP).

This sequence belongs to the DTD family. As to quaternary structure, homodimer.

It localises to the cytoplasm. It carries out the reaction glycyl-tRNA(Ala) + H2O = tRNA(Ala) + glycine + H(+). The catalysed reaction is a D-aminoacyl-tRNA + H2O = a tRNA + a D-alpha-amino acid + H(+). In terms of biological role, an aminoacyl-tRNA editing enzyme that deacylates mischarged D-aminoacyl-tRNAs. Also deacylates mischarged glycyl-tRNA(Ala), protecting cells against glycine mischarging by AlaRS. Acts via tRNA-based rather than protein-based catalysis; rejects L-amino acids rather than detecting D-amino acids in the active site. By recycling D-aminoacyl-tRNA to D-amino acids and free tRNA molecules, this enzyme counteracts the toxicity associated with the formation of D-aminoacyl-tRNA entities in vivo and helps enforce protein L-homochirality. This chain is D-aminoacyl-tRNA deacylase, found in Bacillus cereus (strain G9842).